The following is a 300-amino-acid chain: Urease accessory protein UreD (300 aa).

The protein belongs to the UreD family. UreD, UreF and UreG form a complex that acts as a GTP-hydrolysis-dependent molecular chaperone, activating the urease apoprotein by helping to assemble the nickel containing metallocenter of UreC. The UreE protein probably delivers the nickel.

It localises to the cytoplasm. In terms of biological role, required for maturation of urease via the functional incorporation of the urease nickel metallocenter. The sequence is that of Urease accessory protein UreD from Prochlorococcus marinus (strain MIT 9215).